The primary structure comprises 581 residues: Proline--tRNA ligase (581 aa).

The protein belongs to the class-II aminoacyl-tRNA synthetase family. ProS type 1 subfamily. In terms of assembly, homodimer.

The protein localises to the cytoplasm. The enzyme catalyses tRNA(Pro) + L-proline + ATP = L-prolyl-tRNA(Pro) + AMP + diphosphate. In terms of biological role, catalyzes the attachment of proline to tRNA(Pro) in a two-step reaction: proline is first activated by ATP to form Pro-AMP and then transferred to the acceptor end of tRNA(Pro). As ProRS can inadvertently accommodate and process non-cognate amino acids such as alanine and cysteine, to avoid such errors it has two additional distinct editing activities against alanine. One activity is designated as 'pretransfer' editing and involves the tRNA(Pro)-independent hydrolysis of activated Ala-AMP. The other activity is designated 'posttransfer' editing and involves deacylation of mischarged Ala-tRNA(Pro). The misacylated Cys-tRNA(Pro) is not edited by ProRS. The chain is Proline--tRNA ligase from Verminephrobacter eiseniae (strain EF01-2).